The primary structure comprises 511 residues: Membrane-bound lytic murein transglycosylase F (511 aa).

The first 19 residues, 1-19, serve as a signal peptide directing secretion; that stretch reads MKKLKINYLLIGIVTLLLA. The interval 20 to 269 is non-LT domain; that stretch reads AALWPSIPWS…RLEEKYLGHG (250 aa). The interval 270–511 is LT domain; that stretch reads NDFDYVDTRT…ARMKLPGHLY (242 aa). Glutamate 314 is a catalytic residue.

The protein in the N-terminal section; belongs to the bacterial solute-binding protein 3 family. It in the C-terminal section; belongs to the transglycosylase Slt family.

The protein localises to the cell outer membrane. It carries out the reaction Exolytic cleavage of the (1-&gt;4)-beta-glycosidic linkage between N-acetylmuramic acid (MurNAc) and N-acetylglucosamine (GlcNAc) residues in peptidoglycan, from either the reducing or the non-reducing ends of the peptidoglycan chains, with concomitant formation of a 1,6-anhydrobond in the MurNAc residue.. Functionally, murein-degrading enzyme that degrades murein glycan strands and insoluble, high-molecular weight murein sacculi, with the concomitant formation of a 1,6-anhydromuramoyl product. Lytic transglycosylases (LTs) play an integral role in the metabolism of the peptidoglycan (PG) sacculus. Their lytic action creates space within the PG sacculus to allow for its expansion as well as for the insertion of various structures such as secretion systems and flagella. The sequence is that of Membrane-bound lytic murein transglycosylase F from Klebsiella pneumoniae subsp. pneumoniae (strain ATCC 700721 / MGH 78578).